We begin with the raw amino-acid sequence, 983 residues long: Bifunctional glutamine synthetase adenylyltransferase/adenylyl-removing enzyme (983 aa).

Residues 1-490 (MDRKSSVTID…AHGQVFYSPV (490 aa)) form an adenylyl removase region. Positions 496–983 (RIPTQDLRMS…RVVDAVFWNQ (488 aa)) are adenylyl transferase.

This sequence belongs to the GlnE family. Mg(2+) is required as a cofactor.

It carries out the reaction [glutamine synthetase]-O(4)-(5'-adenylyl)-L-tyrosine + phosphate = [glutamine synthetase]-L-tyrosine + ADP. It catalyses the reaction [glutamine synthetase]-L-tyrosine + ATP = [glutamine synthetase]-O(4)-(5'-adenylyl)-L-tyrosine + diphosphate. Its function is as follows. Involved in the regulation of glutamine synthetase GlnA, a key enzyme in the process to assimilate ammonia. When cellular nitrogen levels are high, the C-terminal adenylyl transferase (AT) inactivates GlnA by covalent transfer of an adenylyl group from ATP to specific tyrosine residue of GlnA, thus reducing its activity. Conversely, when nitrogen levels are low, the N-terminal adenylyl removase (AR) activates GlnA by removing the adenylyl group by phosphorolysis, increasing its activity. The regulatory region of GlnE binds the signal transduction protein PII (GlnB) which indicates the nitrogen status of the cell. The polypeptide is Bifunctional glutamine synthetase adenylyltransferase/adenylyl-removing enzyme (Cutibacterium acnes (strain DSM 16379 / KPA171202) (Propionibacterium acnes)).